The following is a 104-amino-acid chain: MTSVETILNYLAYFNRGDYVIVLVIKQIIEKYNDKVKELDTLKNQYQNLQQDYENLKQQVSLQRQTMISTTNDIKQIVNDFKENYVNIHPEYISDSQTNCHQVE.

A coiled-coil region spans residues 24–69 (VIKQIIEKYNDKVKELDTLKNQYQNLQQDYENLKQQVSLQRQTMIS).

This is an uncharacterized protein from Acanthamoeba polyphaga mimivirus (APMV).